The chain runs to 564 residues: Capsid vertex component 2 (564 aa).

The interval 1 to 45 (MQAARKRWPPSVAFWSPSPKHYVRVDRDSLRETRRLASSLRRNAL) is interaction with major capsid protein/MCP. Residues 91 to 133 (AGDGRGSGNPPTSPGQGHPLSWGNSDSHGGGGGPGGGGGGELL) are disordered. The segment covering 118 to 131 (HGGGGGPGGGGGGE) has biased composition (gly residues).

Belongs to the herpesviridae CVC2 protein family. Heterodimerizes with CVC1. Interacts with major capsid protein/MCP and triplex capsid protein 1/TRX1 at the pentamer vertices. Interacts with the large tegument protein/LTP.

The protein localises to the virion. It localises to the host nucleus. In terms of biological role, capsid vertex-specific component that plays a role during viral DNA encapsidation, assuring correct genome cleavage and presumably stabilizing capsids that contain full-length viral genomes. Participates in the interaction between the capsid and the tegument through interaction with the large tegument protein/LTP. In Equus caballus (Horse), this protein is Capsid vertex component 2.